Here is a 656-residue protein sequence, read N- to C-terminus: Leucine-rich repeat-containing protein 43 (656 aa).

Residues Met-1–Ser-13 show a composition bias toward acidic residues. The tract at residues Met-1–Gly-25 is disordered. 4 LRR repeats span residues Lys-150–Pro-170, Thr-172–Pro-193, Gly-196–Tyr-215, and Asn-223–Leu-244. One can recognise an LRRCT domain in the interval Asn-258–Leu-296. The tract at residues Leu-512–Glu-554 is disordered. Basic and acidic residues predominate over residues Gly-517 to Val-544.

This is Leucine-rich repeat-containing protein 43 (LRRC43) from Homo sapiens (Human).